Reading from the N-terminus, the 598-residue chain is Jacalin-related lectin 17 (598 aa).

A disordered region spans residues 1–23 (MAQRLEAEGNKNFKGKSKWDDGS). Jacalin-type lectin domains lie at 2 to 148 (AQRL…YVTW), 151 to 293 (PTKL…YFTT), 295 to 445 (PFTK…HFCP), and 452 to 595 (GEKV…HVLP).

It belongs to the jacalin lectin family.

The protein is Jacalin-related lectin 17 (JAL17) of Arabidopsis thaliana (Mouse-ear cress).